Here is a 338-residue protein sequence, read N- to C-terminus: Glyceraldehyde-3-phosphate dehydrogenase (338 aa).

NAD(+) contacts are provided by residues 12–13 (RI), aspartate 38, and serine 125. D-glyceraldehyde 3-phosphate-binding positions include 155–157 (SCT), threonine 186, 216–217 (TG), and arginine 239. Cysteine 156 (nucleophile) is an active-site residue. NAD(+) is bound at residue asparagine 320.

The protein belongs to the glyceraldehyde-3-phosphate dehydrogenase family. As to quaternary structure, homotetramer.

The protein resides in the cytoplasm. The enzyme catalyses D-glyceraldehyde 3-phosphate + phosphate + NAD(+) = (2R)-3-phospho-glyceroyl phosphate + NADH + H(+). The protein operates within carbohydrate degradation; glycolysis; pyruvate from D-glyceraldehyde 3-phosphate: step 1/5. In terms of biological role, catalyzes the oxidative phosphorylation of glyceraldehyde 3-phosphate (G3P) to 1,3-bisphosphoglycerate (BPG) using the cofactor NAD. The first reaction step involves the formation of a hemiacetal intermediate between G3P and a cysteine residue, and this hemiacetal intermediate is then oxidized to a thioester, with concomitant reduction of NAD to NADH. The reduced NADH is then exchanged with the second NAD, and the thioester is attacked by a nucleophilic inorganic phosphate to produce BPG. The protein is Glyceraldehyde-3-phosphate dehydrogenase (gap) of Lactobacillus delbrueckii subsp. bulgaricus.